The chain runs to 388 residues: 2-Hydroxyacid oxidase (388 aa).

The interval 1-21 (MENQFKNNNNSSSIETSNQFS) is disordered. An FMN hydroxy acid dehydrogenase domain is found at 26–384 (NRLDSFVSVS…NNSIIWDQNK (359 aa)). Tyr-52 serves as a coordination point for glyoxylate. FMN contacts are provided by residues 105–107 (PWA), Ser-134, 156–158 (QLY), and Thr-184. Tyr-158 lines the glyoxylate pocket. Arg-193 serves as a coordination point for glyoxylate. The FMN site is built by Lys-255 and Ser-277. Glyoxylate-binding residues include His-279 and Arg-282. His-279 acts as the Proton acceptor in catalysis. Residues 310–314 (DGGIR) and 333–334 (GR) each bind FMN.

The protein belongs to the FMN-dependent alpha-hydroxy acid dehydrogenase family. As to quaternary structure, homotetramer. It depends on FMN as a cofactor.

It catalyses the reaction glycolate + O2 = glyoxylate + H2O2. It carries out the reaction a (2S)-2-hydroxycarboxylate + O2 = a 2-oxocarboxylate + H2O2. Its function is as follows. Catalyzes the oxidation of glycolate to glyoxylate, with a reduction of O2 to H2O2. May use other 2-hydroxyacids as substrates. The protein is 2-Hydroxyacid oxidase (haox) of Dictyostelium discoideum (Social amoeba).